The primary structure comprises 397 residues: Elongation factor Tu (397 aa).

Residues 10–207 (KPHVNIGTIG…ACDSYIPEPE (198 aa)) form the tr-type G domain. Positions 19–26 (GHIDHGKT) are G1. 19–26 (GHIDHGKT) lines the GTP pocket. A Mg(2+)-binding site is contributed by threonine 26. Positions 60–64 (GITIA) are G2. The G3 stretch occupies residues 81–84 (DCPG). Residues 81 to 85 (DCPGH) and 136 to 139 (NKCD) each bind GTP. Positions 136 to 139 (NKCD) are G4. Positions 174–176 (SAL) are G5.

It belongs to the TRAFAC class translation factor GTPase superfamily. Classic translation factor GTPase family. EF-Tu/EF-1A subfamily. In terms of assembly, monomer.

The protein localises to the cytoplasm. The catalysed reaction is GTP + H2O = GDP + phosphate + H(+). Its function is as follows. GTP hydrolase that promotes the GTP-dependent binding of aminoacyl-tRNA to the A-site of ribosomes during protein biosynthesis. This chain is Elongation factor Tu, found in Oleidesulfovibrio alaskensis (strain ATCC BAA-1058 / DSM 17464 / G20) (Desulfovibrio alaskensis).